We begin with the raw amino-acid sequence, 427 residues long: Glutamate-1-semialdehyde 2,1-aminomutase (427 aa).

Position 264 is an N6-(pyridoxal phosphate)lysine (Lys-264).

The protein belongs to the class-III pyridoxal-phosphate-dependent aminotransferase family. HemL subfamily. In terms of assembly, homodimer. Requires pyridoxal 5'-phosphate as cofactor.

The protein resides in the cytoplasm. The catalysed reaction is (S)-4-amino-5-oxopentanoate = 5-aminolevulinate. Its pathway is porphyrin-containing compound metabolism; protoporphyrin-IX biosynthesis; 5-aminolevulinate from L-glutamyl-tRNA(Glu): step 2/2. In Campylobacter concisus (strain 13826), this protein is Glutamate-1-semialdehyde 2,1-aminomutase.